Here is a 290-residue protein sequence, read N- to C-terminus: Small ribosomal subunit protein uS2 (290 aa).

This sequence belongs to the universal ribosomal protein uS2 family. In terms of assembly, component of the small ribosomal subunit. Mature ribosomes consist of a small (40S) and a large (60S) subunit. The 40S subunit contains about 33 different proteins and 1 molecule of RNA (18S). The 60S subunit contains about 49 different proteins and 3 molecules of RNA (28S, 5.8S and 5S). Interacts with ribosomal protein S21.

The protein resides in the cytoplasm. Required for the assembly and/or stability of the 40S ribosomal subunit. Required for the processing of the 20S rRNA-precursor to mature 18S rRNA in a late step of the maturation of 40S ribosomal subunits. In Culex quinquefasciatus (Southern house mosquito), this protein is Small ribosomal subunit protein uS2.